A 126-amino-acid polypeptide reads, in one-letter code: Holo-[acyl-carrier-protein] synthase (126 aa).

The Mg(2+) site is built by Asp9 and Glu58.

The protein belongs to the P-Pant transferase superfamily. AcpS family. Mg(2+) is required as a cofactor.

The protein localises to the cytoplasm. It catalyses the reaction apo-[ACP] + CoA = holo-[ACP] + adenosine 3',5'-bisphosphate + H(+). Its function is as follows. Transfers the 4'-phosphopantetheine moiety from coenzyme A to a Ser of acyl-carrier-protein. This is Holo-[acyl-carrier-protein] synthase from Cronobacter sakazakii (strain ATCC BAA-894) (Enterobacter sakazakii).